Here is a 218-residue protein sequence, read N- to C-terminus: Envelope glycoprotein L (218 aa).

The segment at 57-185 is interaction with gH; that stretch reads KLVKATRLDF…LGPPPLGCFT (129 aa). The region spanning 60-218 is the gL alphaherpesvirus-type domain; the sequence is KATRLDFTWG…ASYYANLQKT (159 aa). 2 cysteine pairs are disulfide-bonded: C81/C113 and C183/C206.

It belongs to the herpesviridae glycoprotein L (gL) family. Alphaherpesvirinae gL subfamily. Interacts with glycoprotein H (gH); this interaction is necessary for the correct processing and cell surface expression of gH. The heterodimer gH/gL seems to interact with gB trimers during fusion.

It is found in the virion membrane. It localises to the host cell membrane. The protein localises to the host Golgi apparatus. Its subcellular location is the host trans-Golgi network. The heterodimer glycoprotein H-glycoprotein L is required for the fusion of viral and plasma membranes leading to virus entry into the host cell. Acts as a functional inhibitor of gH and maintains gH in an inhibited form. Upon binding to host integrins, gL dissociates from gH leading to activation of the viral fusion glycoproteins gB and gH. This Equus caballus (Horse) protein is Envelope glycoprotein L.